The primary structure comprises 1052 residues: Multidrug resistance protein MdtB (1052 aa).

11 helical membrane passes run 15–37, 345–362, 367–389, 396–418, 438–460, 472–494, 535–557, 867–889, 909–931, 968–990, and 1000–1022; these read LFIL…GIIG, FELL…YLFL, ATII…MYFL, LTLM…VIEN, GEIG…PLLF, FAVT…TPMM, HPWL…YLLI, LWLI…ESFI, LMLT…IGIV, ILMT…GVGA, and MVGG…YLLF. The tract at residues 1032-1052 is disordered; sequence KNRHRDEDIDSSELLNGQEPQ.

This sequence belongs to the resistance-nodulation-cell division (RND) (TC 2.A.6) family. MdtB subfamily. In terms of assembly, part of a tripartite efflux system composed of MdtA, MdtB and MdtC. MdtB forms a heteromultimer with MdtC.

It is found in the cell inner membrane. This Yersinia pestis protein is Multidrug resistance protein MdtB.